The chain runs to 881 residues: Cell wall protein PRY3 (881 aa).

Residues 1–18 (MLEFPISVLLGCLVAVKA) form the signal peptide. Residues 30 to 144 (LNEHNKFRAL…TWNNYIVCSY (115 aa)) form the SCP domain. Asn101 is a glycosylation site (N-linked (GlcNAc...) asparagine). A disordered region spans residues 262-313 (VVSSDATSSTTTTSSVATSSSTTSSDPTSSTAAASSSDPASSSAAASSSAST). Residue Asn360 is glycosylated (N-linked (GlcNAc...) asparagine). 2 disordered regions span residues 381–400 (AADD…VSEH) and 453–494 (VSST…NSAA). Residues 386-400 (QGSTSKEATSSVSEH) show a composition bias toward polar residues. 4 N-linked (GlcNAc...) asparagine glycosylation sites follow: Asn488, Asn535, Asn547, and Asn569. The disordered stretch occupies residues 579–611 (IDPTLDPTDNSASPTDNAKHTSTYGSSSTGASL). Polar residues predominate over residues 585 to 594 (PTDNSASPTD). Over residues 599-611 (TSTYGSSSTGASL) the composition is skewed to low complexity. A glycan (N-linked (GlcNAc...) asparagine) is linked at Asn625. 2 disordered regions span residues 758 to 788 (LASD…TTTT) and 800 to 830 (PSST…MHQP). 2 stretches are compositionally biased toward low complexity: residues 776 to 788 (STSN…TTTT) and 808 to 820 (RTTT…STTS). Residues 821 to 830 (QQDGSAMHQP) show a composition bias toward polar residues. Residue Gly853 is the site of GPI-anchor amidated glycine attachment. A propeptide spans 854–881 (AATPLSIFQCNSLAGTIAAFVVAVLFAF) (removed in mature form).

It belongs to the CRISP family. Post-translationally, the GPI-anchor is attached to the protein in the endoplasmic reticulum and serves to target the protein to the cell surface. There, the glucosamine-inositol phospholipid moiety is cleaved off and the GPI-modified mannoprotein is covalently attached via its lipidless GPI glycan remnant to the 1,6-beta-glucan of the outer cell wall layer.

It is found in the secreted. The protein resides in the cell wall. Its subcellular location is the membrane. The full-length isoform (isoform Long) is a daughter cell-specific cell wall protein required for efficient export of lipids such as acetylated sterols. Acts in detoxification of hydrophobic compounds. Involved in tolerance to organic solvents such as dimethyl sulfoxide (DMSO). Also plays a role as an inhibitor of mating. STE12 is utilized as a repressor of full-length PRY3 transcription, ensuring efficient mating. In terms of biological role, there is no evidence that production of the short PRY3 transcript (isoform Short) is anything more than an adventitious by-product of the mechanism responsible for the repression of the full-length transcript. Moreover, no disadvantage is detectable for cells unable to make the short transcript. The polypeptide is Cell wall protein PRY3 (PRY3) (Saccharomyces cerevisiae (strain ATCC 204508 / S288c) (Baker's yeast)).